Consider the following 249-residue polypeptide: Domoic acid biosynthesis cluster protein B (249 aa).

Functionally, unknown function: part of the gene cluster that mediates the biosynthesis of domoic acid (DA) and derivatives, natural products with neurochemical activity acting as ionotropic glutamate receptor (iGluR) agonists, thus being neurotoxins causing amnesic shellfish poisoning (ASP). The polypeptide is Domoic acid biosynthesis cluster protein B (Pseudo-nitzschia multiseries (Marine planktonic diatom)).